Consider the following 377-residue polypeptide: Probable transposase for insertion sequence element IS5377 (377 aa).

It belongs to the transposase 11 family.

In Geobacillus stearothermophilus (Bacillus stearothermophilus), this protein is Probable transposase for insertion sequence element IS5377.